The primary structure comprises 171 residues: 6,7-dimethyl-8-ribityllumazine synthase (171 aa).

5-amino-6-(D-ribitylamino)uracil is bound by residues phenylalanine 24, 58 to 60, and 82 to 84; these read ALE and AVI. 87-88 is a binding site for (2S)-2-hydroxy-3-oxobutyl phosphate; it reads ET. The Proton donor role is filled by histidine 90. Asparagine 115 contributes to the 5-amino-6-(D-ribitylamino)uracil binding site. (2S)-2-hydroxy-3-oxobutyl phosphate is bound at residue arginine 129. The segment at 150 to 171 is disordered; that stretch reads ALDQLGDDEDEEEDEEDEEERA. A compositionally biased stretch (acidic residues) spans 154–171; that stretch reads LGDDEDEEEDEEDEEERA.

It belongs to the DMRL synthase family.

It carries out the reaction (2S)-2-hydroxy-3-oxobutyl phosphate + 5-amino-6-(D-ribitylamino)uracil = 6,7-dimethyl-8-(1-D-ribityl)lumazine + phosphate + 2 H2O + H(+). It functions in the pathway cofactor biosynthesis; riboflavin biosynthesis; riboflavin from 2-hydroxy-3-oxobutyl phosphate and 5-amino-6-(D-ribitylamino)uracil: step 1/2. In terms of biological role, catalyzes the formation of 6,7-dimethyl-8-ribityllumazine by condensation of 5-amino-6-(D-ribitylamino)uracil with 3,4-dihydroxy-2-butanone 4-phosphate. This is the penultimate step in the biosynthesis of riboflavin. In Burkholderia ambifaria (strain ATCC BAA-244 / DSM 16087 / CCUG 44356 / LMG 19182 / AMMD) (Burkholderia cepacia (strain AMMD)), this protein is 6,7-dimethyl-8-ribityllumazine synthase.